Here is a 370-residue protein sequence, read N- to C-terminus: Peptide chain release factor 1 (370 aa).

Glutamine 237 carries the post-translational modification N5-methylglutamine. Basic and acidic residues predominate over residues 286–296; that stretch reads ERQRSARDATR. The interval 286-310 is disordered; sequence ERQRSARDATRKSQVGTGDRSEKIR.

Belongs to the prokaryotic/mitochondrial release factor family. Methylated by PrmC. Methylation increases the termination efficiency of RF1.

Its subcellular location is the cytoplasm. In terms of biological role, peptide chain release factor 1 directs the termination of translation in response to the peptide chain termination codons UAG and UAA. This Anaeromyxobacter dehalogenans (strain 2CP-C) protein is Peptide chain release factor 1.